We begin with the raw amino-acid sequence, 278 residues long: Insulin-like growth factor-binding protein-like 1 (278 aa).

Residues 1–25 (MPRLSLLLPLLLLLLLPLLPPLSPS) form the signal peptide. Residues 34 to 109 (RRPKCGPCRP…PEGTGLCVCA (76 aa)) enclose the IGFBP N-terminal domain. 7 disulfides stabilise this stretch: Cys-38-Cys-63, Cys-41-Cys-65, Cys-46-Cys-66, Cys-52-Cys-69, Cys-77-Cys-91, Cys-85-Cys-106, and Cys-115-Cys-151. The Kazal-like domain occupies 95–153 (AAGAAPEGTGLCVCAQRGTVCGSDGRSYPSVCALRLRARHTPRAHPGHLHKARDGPCEF). The Ig-like C2-type domain maps to 155 to 259 (PVVVVPPRSV…GEAESHSTVT (105 aa)). Residue Asn-166 is glycosylated (N-linked (GlcNAc...) asparagine). A disulfide bridge links Cys-176 with Cys-243.

As to expression, expressed at the highest level in both brain and testis, with lower levels in the prostate, bladder and lung.

Its subcellular location is the secreted. Its function is as follows. IGF-binding proteins prolong the half-life of IGFs and have been shown to either inhibit or stimulate the growth promoting effects of the IGFs in cell culture. They alter the interaction of IGFs with their cell surface receptors. May be a putative tumor suppressor protein. This chain is Insulin-like growth factor-binding protein-like 1 (IGFBPL1), found in Homo sapiens (Human).